The chain runs to 64 residues: MAVCQICGKKTAHGNRVAHSATTTKRTWKPNLQKVKAVLPDGTTKKIYVCAKCLKAGKVRKAVR.

The protein belongs to the bacterial ribosomal protein bL28 family.

The protein is Large ribosomal subunit protein bL28 of Persephonella marina (strain DSM 14350 / EX-H1).